We begin with the raw amino-acid sequence, 289 residues long: ATP synthase gamma chain (289 aa).

It belongs to the ATPase gamma chain family. F-type ATPases have 2 components, CF(1) - the catalytic core - and CF(0) - the membrane proton channel. CF(1) has five subunits: alpha(3), beta(3), gamma(1), delta(1), epsilon(1). CF(0) has three main subunits: a, b and c.

Its subcellular location is the cell inner membrane. Produces ATP from ADP in the presence of a proton gradient across the membrane. The gamma chain is believed to be important in regulating ATPase activity and the flow of protons through the CF(0) complex. The chain is ATP synthase gamma chain from Cereibacter sphaeroides (strain ATCC 17025 / ATH 2.4.3) (Rhodobacter sphaeroides).